The following is a 185-amino-acid chain: MISDIIKELEEKMTKSISALKKELTSMKAGRANPAMLDRIEVDYYGTMTPLNQLANISVPESRVLMIQPWDKSAMKSIEKAILISDLGLNPSNDGTTMRLVIPELTEETRKNIVKNVKKAGEDGKVALRAIRRDANDKVKSLKKDNSITEDEMKSAENDIQKKTDSYVKEIDKMVEAKEKEIMSI.

This sequence belongs to the RRF family.

It localises to the cytoplasm. Its function is as follows. Responsible for the release of ribosomes from messenger RNA at the termination of protein biosynthesis. May increase the efficiency of translation by recycling ribosomes from one round of translation to another. In Clostridium acetobutylicum (strain ATCC 824 / DSM 792 / JCM 1419 / IAM 19013 / LMG 5710 / NBRC 13948 / NRRL B-527 / VKM B-1787 / 2291 / W), this protein is Ribosome-recycling factor.